The following is a 167-amino-acid chain: Novel acetylcholine receptor chaperone (167 aa).

Topologically, residues 1 to 5 are cytoplasmic; sequence MASPR. A helical membrane pass occupies residues 6–26; sequence TVTIVALSVALGLFFVFMGTI. Over 27 to 61 the chain is Lumenal; the sequence is KLTPRLSKDAYSEMKRAYKSYVRALPLLKKMGINS. The interval 43–54 is interaction with NGFR; the sequence is AYKSYVRALPLL. The helical transmembrane segment at 62 to 82 threads the bilayer; it reads ILLRKSIGALEVACGIVMTLV. Residues 83-88 are Cytoplasmic-facing; it reads PGRPKD. Residues 89 to 109 form a helical membrane-spanning segment; sequence VANFFLLLLVLAVLFFHQLVG. Residues 110-114 lie on the Lumenal side of the membrane; sequence DPLKR. A helical membrane pass occupies residues 115–132; sequence YAHALVFGILLTCRLLIA. The Cytoplasmic segment spans residues 133-167; the sequence is RKPEDRSSEKKPLPGNAEEQPSLYEKAPQGKVKVS. Residues 136 to 167 are disordered; sequence EDRSSEKKPLPGNAEEQPSLYEKAPQGKVKVS.

The protein belongs to the DoxX family. In terms of assembly, may interact with NGFR. Interacts with RPN1, RPN2 and CANX.

Its subcellular location is the peroxisome membrane. It is found in the cytoplasmic vesicle. The protein localises to the endoplasmic reticulum membrane. Functionally, molecular chaperone which mediates the proper assembly and functional expression of the nicotinic acetylcholine receptors (nAChRs) throughout the brain. Essential for the proper folding, assembly, function and surface trafficking of alpha-7 (CHRNA7), alpha-4-beta-2, alpha-3-beta-2 and alpha-3-beta-4 receptors. Stably associates with ribophorin-1 (RPN1) and ribophorin-2 (RPN2) (components of the oligosaccharyl transferase (OST) complex) and with calnexin (CANX), both of which are critical for NACHO-mediated effects on CHRNA7 assembly and function. Facilitates the proper folding and assembly of alpha-6-beta-2 and alpha-6-beta-2-beta-3 receptors and acts at early stages of the nAChRs subunit assembly. Promotes the expression of the alpha-4(2):beta-2(3) stoichiometric form over the alpha-4(3):beta-2(2) form. In Macaca fascicularis (Crab-eating macaque), this protein is Novel acetylcholine receptor chaperone (TMEM35A).